We begin with the raw amino-acid sequence, 604 residues long: Glutamine--fructose-6-phosphate aminotransferase [isomerizing] (604 aa).

Residue cysteine 2 is the Nucleophile; for GATase activity of the active site. A Glutamine amidotransferase type-2 domain is found at cysteine 2–glutamate 216. SIS domains follow at residues leucine 281–alanine 420 and valine 453–proline 594. The active-site For Fru-6P isomerization activity is the lysine 599.

In terms of assembly, homodimer.

The protein resides in the cytoplasm. It carries out the reaction D-fructose 6-phosphate + L-glutamine = D-glucosamine 6-phosphate + L-glutamate. Functionally, catalyzes the first step in hexosamine metabolism, converting fructose-6P into glucosamine-6P using glutamine as a nitrogen source. In Thermus thermophilus (strain ATCC 27634 / DSM 579 / HB8), this protein is Glutamine--fructose-6-phosphate aminotransferase [isomerizing].